A 407-amino-acid polypeptide reads, in one-letter code: SERPINE1 mRNA-binding protein 1 (407 aa).

Ser-25 bears the Phosphoserine mark. Positions 33–227 (AAENKKKEAG…GSGSHNWGTV (195 aa)) are disordered. Residues 51–68 (AKSAAQAAAQTNSNAAGK) are compositionally biased toward low complexity. Lys-52 is subject to N6-acetyllysine; alternate. Lys-52 participates in a covalent cross-link: Glycyl lysine isopeptide (Lys-Gly) (interchain with G-Cter in SUMO1); alternate. Lys-68 is subject to N6-acetyllysine. Composition is skewed to basic and acidic residues over residues 70 to 80 (LRKESQKDRKN), 89 to 114 (ADKKEETQPPVALKKEGIRRVGRRPD), and 122 to 162 (KLID…ERPI). Residue Lys-102 forms a Glycyl lysine isopeptide (Lys-Gly) (interchain with G-Cter in SUMO2) linkage. Residues Lys-122 and Lys-140 each carry the N6-acetyllysine modification. Residues 164-182 (GRGGLGRGRGGRGRGMGRG) show a composition bias toward gly residues. Omega-N-methylarginine occurs at positions 165 and 188. Residues 183–199 (DGFDSRGKREFDRHSGS) are compositionally biased toward basic and acidic residues. Phosphoserine is present on residues Ser-197, Ser-199, Ser-203, Ser-205, and Ser-208. N6-acetyllysine; alternate is present on Lys-211. Lys-211 participates in a covalent cross-link: Glycyl lysine isopeptide (Lys-Gly) (interchain with G-Cter in SUMO2); alternate. Arg-216 bears the Omega-N-methylarginine mark. Ser-221 is subject to Phosphoserine. Thr-226 bears the Phosphothreonine mark. Residue Lys-228 forms a Glycyl lysine isopeptide (Lys-Gly) (interchain with G-Cter in SUMO1); alternate linkage. Residue Lys-228 forms a Glycyl lysine isopeptide (Lys-Gly) (interchain with G-Cter in SUMO2); alternate linkage. Residues Leu-231, Ser-234, and Tyr-237 each carry the phosphoserine modification. Residue Ser-234 is modified to Phosphothreonine. Lys-240 is subject to Phosphothreonine. Polar residues predominate over residues 242–256 (ISYNCSDLDQSNVTE). Disordered stretches follow at residues 242–288 (ISYN…KEMT) and 327–407 (SKSE…PALA). A compositionally biased stretch (basic and acidic residues) spans 261-274 (GEEHPVADTENKEN). Lys-280 is covalently cross-linked (Glycyl lysine isopeptide (Lys-Gly) (interchain with G-Cter in SUMO2)). Basic and acidic residues predominate over residues 327 to 341 (SKSEEAHAEDSVMDH). The residue at position 328 (Lys-328) is an N6-acetyllysine. Phosphoserine is present on Ser-329. Residues 362–371 (GRPGRGGRGG) are compositionally biased toward gly residues. Residues Arg-363, Arg-366, and Arg-369 each carry the omega-N-methylarginine modification. Phosphoserine is present on residues Ser-391 and Ser-393.

Belongs to the SERBP1-HABP4 family. In terms of assembly, associates with mature 80S ribosomes. Interacts with EEF2/eEF2; interaction sequesters EEF2/eEF2 at the A-site of the ribosome, thereby blocking the interaction sites of the mRNA-tRNA complex, promoting ribosome stabilization and hibernation. Interacts with SPIN1. Interacts with CHD3 and TDRD3. Interacts with ZDHHC17 (via ANK repeats). In terms of processing, phosphorylation by MTOR inhibits SERBP1 and relieves ribosome hibernation.

The protein resides in the cytoplasm. It localises to the nucleus. The protein localises to the perinuclear region. Functionally, ribosome-binding protein that promotes ribosome hibernation, a process during which ribosomes are stabilized in an inactive state and preserved from proteasomal degradation. Acts via its association with EEF2/eEF2 factor, sequestering EEF2/eEF2 at the A-site of the ribosome and promoting ribosome stabilization and storage in an inactive state. May also play a role in the regulation of mRNA stability: binds to the 3'-most 134 nt of the SERPINE1/PAI1 mRNA, a region which confers cyclic nucleotide regulation of message decay. Seems to play a role in PML-nuclear bodies formation. This is SERPINE1 mRNA-binding protein 1 from Mus musculus (Mouse).